A 510-amino-acid polypeptide reads, in one-letter code: Serine/threonine-protein kinase UL13 homolog (510 aa).

A disordered region spans residues 1-63 (MDADDTPPNL…WANPSTATCM (63 aa)). The 327-residue stretch at 132-458 (RDRPRFAGRG…RRIFQCHAVR (327 aa)) folds into the Protein kinase domain. Residues 138–146 (AGRGTYGRV) and Lys157 each bind ATP. Asp257 (proton acceptor) is an active-site residue.

This sequence belongs to the protein kinase superfamily. Ser/Thr protein kinase family. In terms of processing, autophosphorylated.

It is found in the virion tegument. It localises to the host nucleus. It carries out the reaction L-seryl-[protein] + ATP = O-phospho-L-seryl-[protein] + ADP + H(+). It catalyses the reaction L-threonyl-[protein] + ATP = O-phospho-L-threonyl-[protein] + ADP + H(+). Functionally, multifunctional serine/threonine kinase that plays a role in several processes including egress of virus particles from the nucleus, modulation of the actin cytoskeleton and regulation of viral and cellular gene expression. Regulates the nuclear localization of viral envelopment factor proteins 24 and 27, by phosphorylating the protein kinase ORF66, indicating a role in nuclear egress. Disrupts host nuclear lamins, including LMNA and LMNB1. Phosphorylates the viral Fc receptor composed of glycoproteins E (gE) and I (gI). Phosphorylation of glycoprotein E (gE) by UL13 alters its subcellular localization, from the host early endosome to the plasma membrane. Participates in the transcriptional regulation of cellular and viral mRNAs mainly by phosphorylating the viral transcriptional regulator IE63. This chain is Serine/threonine-protein kinase UL13 homolog, found in Varicella-zoster virus (strain Dumas) (HHV-3).